The chain runs to 395 residues: MMAAKVVPMPPKPKQSFILRVPPDSKLGQDLLRDATNGPKTIHQLVLEHFLTFLPKPSLVQPSQKVKETLVIMKDVSSSLQNRVHPRPLVKLLPKGVQKEQETVSLYLKANPEELVVFEDLNVFHCQEECVSLDPTQQLTSEKEDDSSVGEMMLLAVNGSNPEGEDPEREPVENEDYREKSSDDDEMDSSLVSQQPPDNQEKERLNTSIPQKRKMRNLLVTIENDTPLEELSKYVDISIIALTRNRRTRRWYTCPLCGKQFNESSYLISHQRTHTGEKPYDCNHCGKSFNHKTNLNKHERIHTGEKPYSCSQCGKNFRQNSHRSRHEGIHIREKIFKCPECGKTFPKNEEFVLHLQSHEAERPYGCKKCGRRFGRLSNCTRHEKTHSACKTRKQK.

Residues 157 to 208 (VNGSNPEGEDPEREPVENEDYREKSSDDDEMDSSLVSQQPPDNQEKERLNTS) form a disordered region. Over residues 169 to 181 (REPVENEDYREKS) the composition is skewed to basic and acidic residues. The tract at residues 246–395 (RRTRRWYTCP…HSACKTRKQK (150 aa)) is interaction with PRMT3. C2H2-type zinc fingers lie at residues 252 to 274 (YTCP…QRTH), 280 to 302 (YDCN…ERIH), 308 to 330 (YSCS…EGIH), 336 to 358 (FKCP…LQSH), and 364 to 386 (YGCK…EKTH).

As to quaternary structure, interacts (via C-terminus) with PRMT3 (via zinc-finger); the interaction is direct and required to localize protein arginine N-methyltransferase PRMT3 to the nucleus and inhibit its proteasomal degradation. Highly expressed in testis, weakly expressed in spleen, thymus, prostate, ovary, small intestine colon and peripheral blood leukocytes.

Its subcellular location is the nucleus. In terms of biological role, localizes protein arginine N-methyltransferase PRMT3 to the nucleus. This chain is Zinc finger protein 200 (ZNF200), found in Homo sapiens (Human).